The sequence spans 315 residues: Protein FRA10AC1 (315 aa).

The residue at position 1 (Met-1) is an N-acetylmethionine. The interval 1-28 is disordered; it reads MHGHGGYDSDFSDDERCGESSKRKKRTV. Phosphoserine occurs at positions 9 and 12. The residue at position 36 (Lys-36) is an N6-acetyllysine. The span at 226-235 shows a compositional bias: basic residues; it reads EIKSKKRKDK. A disordered region spans residues 226–315; sequence EIKSKKRKDK…FDEYFQDLFL (90 aa). Over residues 236–245 the composition is skewed to basic and acidic residues; the sequence is TKKDCEESSH. 5 positions are modified to phosphoserine: Ser-251, Ser-252, Ser-278, Ser-283, and Ser-285. Positions 268 to 278 are enriched in basic and acidic residues; it reads KKSEDSLLRNS. Positions 301-315 are enriched in acidic residues; sequence SQEEEFDEYFQDLFL.

In terms of assembly, interacts with ESS2. As to expression, ubiquitously expressed with higher expression in brain, heart, skeletal muscle, kidney and liver.

The protein resides in the nucleus. In terms of biological role, may be involved in pre-mRNA splicing. This Homo sapiens (Human) protein is Protein FRA10AC1 (FRA10AC1).